Here is a 595-residue protein sequence, read N- to C-terminus: UvrABC system protein C (595 aa).

In terms of domain architecture, GIY-YIG spans 14–91; the sequence is SNPGCYLHKD…IQENMPKFNI (78 aa). Residues 196–231 form the UVR domain; that stretch reads DKIVNQLKAKMKDMSDQMEFERAAEYRDLIEAVSTL.

It belongs to the UvrC family. Interacts with UvrB in an incision complex.

Its subcellular location is the cytoplasm. Its function is as follows. The UvrABC repair system catalyzes the recognition and processing of DNA lesions. UvrC both incises the 5' and 3' sides of the lesion. The N-terminal half is responsible for the 3' incision and the C-terminal half is responsible for the 5' incision. In Streptococcus thermophilus (strain CNRZ 1066), this protein is UvrABC system protein C.